A 345-amino-acid chain; its full sequence is Uroporphyrinogen decarboxylase (345 aa).

Residues 23–27, Asp73, Tyr149, Thr203, and His319 each bind substrate; that span reads RQAGR.

This sequence belongs to the uroporphyrinogen decarboxylase family. Homodimer.

It is found in the cytoplasm. The catalysed reaction is uroporphyrinogen III + 4 H(+) = coproporphyrinogen III + 4 CO2. It functions in the pathway porphyrin-containing compound metabolism; protoporphyrin-IX biosynthesis; coproporphyrinogen-III from 5-aminolevulinate: step 4/4. Catalyzes the decarboxylation of four acetate groups of uroporphyrinogen-III to yield coproporphyrinogen-III. The sequence is that of Uroporphyrinogen decarboxylase from Vesicomyosocius okutanii subsp. Calyptogena okutanii (strain HA).